We begin with the raw amino-acid sequence, 305 residues long: MQHPREENSIVVELEPSLATFIKQGFNNLVKWPLLNIGIVLSNTSTAVNEEWLTAVEHIPTMKIFYKHIHKILTREMGFLVYLKRSQSERDNYITLYDFDYYIIDKDTNSVTMVDKPTELKETLLHVFQEYRLKSSQTIELIAFSSGTVINEDIVSKLTFLDVEVFNREYNNVKTIIDPDFVSRSPFIVISPMGKLTFFVEVYSWFDFKSCFKDIIDFLEGALIANIHNHMIKVGDCDETVSSYNPESGMLFVNDLMTMNIVNFFGCNSRLESYHRFDMTKVDVELFIKALSDACKKILSASNRL.

It belongs to the poxviridae DNA-directed RNA polymerase 35 kDa subunit family. As to quaternary structure, the DNA-dependent RNA polymerase used for intermediate and late genes expression consists of eight subunits 147 kDa, 133 kDa, 35 kDa, 30 kDa, 22 kDa, 19 kDa, 18 kDa and 7 kDa totalling more than 500 kDa in mass. The same holoenzyme, with the addition of the transcription-specificity factor RAP94, is used for early gene expression.

It is found in the virion. It catalyses the reaction RNA(n) + a ribonucleoside 5'-triphosphate = RNA(n+1) + diphosphate. In terms of biological role, part of the DNA-dependent RNA polymerase which catalyzes the transcription of viral DNA into RNA using the four ribonucleoside triphosphates as substrates. Responsible for the transcription of early, intermediate and late genes. DNA-dependent RNA polymerase associates with the early transcription factor (ETF) thereby allowing the early genes transcription. Late transcription, and probably also intermediate transcription, require newly synthesized RNA polymerase. The polypeptide is DNA-directed RNA polymerase 35 kDa subunit (RPO35) (Rabbitpox virus (strain Utrecht) (RPV)).